The following is a 234-amino-acid chain: Cell fusion protein dni1 (234 aa).

The signal sequence occupies residues 1 to 32 (MLFLHSVVQGTGTLCTLAAWILLALVMTGCQS). At 33-96 (STTSKFQLFS…RSKFLINEVH (64 aa)) the chain is on the extracellular side. The helical transmembrane segment at 97–117 (PWMIVFSFCVCGVSFLMGVVS) threads the bilayer. The Cytoplasmic segment spans residues 118–132 (SLPLIGRLEFLRNIR). A helical membrane pass occupies residues 133-153 (ISLSFFSFFSILVTALFAHVA). Topologically, residues 154–178 (VSSFVMAVGNGTQNRVTASLGKKAM) are extracellular. A helical membrane pass occupies residues 179–199 (IFLWCSMGLVTLTGITDSIIL). At 200–234 (LVTSRTKKIRKTILEKSKVLTPSSSFSSKSSTTKY) the chain is on the cytoplasmic side.

Belongs to the SUR7 family.

It is found in the cell membrane. The protein resides in the cell tip. In terms of biological role, cell membrane protein which plays a relevant role in coordinating membrane organization and cell wall remodeling during mating. The chain is Cell fusion protein dni1 (dni1) from Schizosaccharomyces pombe (strain 972 / ATCC 24843) (Fission yeast).